The sequence spans 146 residues: Large ribosomal subunit protein uL23B (146 aa).

Positions 1 to 22 (MAPSSNKVGKAIQAKKAVVKGS) are disordered.

It belongs to the universal ribosomal protein uL23 family.

This protein binds to a specific region on the 26S rRNA. This chain is Large ribosomal subunit protein uL23B (rpl-23A.2), found in Caenorhabditis elegans.